Reading from the N-terminus, the 490-residue chain is Aspartyl/glutamyl-tRNA(Asn/Gln) amidotransferase subunit B (490 aa).

The protein belongs to the GatB/GatE family. GatB subfamily. Heterotrimer of A, B and C subunits.

The enzyme catalyses L-glutamyl-tRNA(Gln) + L-glutamine + ATP + H2O = L-glutaminyl-tRNA(Gln) + L-glutamate + ADP + phosphate + H(+). The catalysed reaction is L-aspartyl-tRNA(Asn) + L-glutamine + ATP + H2O = L-asparaginyl-tRNA(Asn) + L-glutamate + ADP + phosphate + 2 H(+). Functionally, allows the formation of correctly charged Asn-tRNA(Asn) or Gln-tRNA(Gln) through the transamidation of misacylated Asp-tRNA(Asn) or Glu-tRNA(Gln) in organisms which lack either or both of asparaginyl-tRNA or glutaminyl-tRNA synthetases. The reaction takes place in the presence of glutamine and ATP through an activated phospho-Asp-tRNA(Asn) or phospho-Glu-tRNA(Gln). The protein is Aspartyl/glutamyl-tRNA(Asn/Gln) amidotransferase subunit B of Prochlorococcus marinus (strain AS9601).